We begin with the raw amino-acid sequence, 880 residues long: Leucine--tRNA ligase (880 aa).

Positions 46 to 56 (PYPSGALHMGH) match the 'HIGH' region motif. The short motif at 638–642 (KMSKS) is the 'KMSKS' region element. Position 641 (lysine 641) interacts with ATP.

The protein belongs to the class-I aminoacyl-tRNA synthetase family.

The protein localises to the cytoplasm. It carries out the reaction tRNA(Leu) + L-leucine + ATP = L-leucyl-tRNA(Leu) + AMP + diphosphate. This Xanthomonas oryzae pv. oryzae (strain MAFF 311018) protein is Leucine--tRNA ligase.